The sequence spans 218 residues: N-(5'-phosphoribosyl)anthranilate isomerase (218 aa).

Belongs to the TrpF family.

The enzyme catalyses N-(5-phospho-beta-D-ribosyl)anthranilate = 1-(2-carboxyphenylamino)-1-deoxy-D-ribulose 5-phosphate. The protein operates within amino-acid biosynthesis; L-tryptophan biosynthesis; L-tryptophan from chorismate: step 3/5. The chain is N-(5'-phosphoribosyl)anthranilate isomerase from Chelativorans sp. (strain BNC1).